Reading from the N-terminus, the 501-residue chain is Nuclear receptor subfamily 5 group A member 2 (501 aa).

Residues 43–114 (EELCPVCGDK…KCLSVGMKLE (72 aa)) constitute a DNA-binding region (nuclear receptor). 8 residues coordinate Zn(2+): cysteine 46, cysteine 49, cysteine 63, cysteine 66, cysteine 82, cysteine 88, cysteine 98, and cysteine 101. 2 consecutive NR C4-type zinc fingers follow at residues 46 to 66 (CPVC…CESC) and 82 to 106 (CIEN…FQKC). Residues 112-127 (KLEAVRADRMRGGRNK) form a C-terminal extension (CTE) region. The short motif at 128–147 (FGPMYKRDRALKQQKKALIR) is the FTZ-F1 box element. The disordered stretch occupies residues 186–207 (NHTALPPTDYDRSPFVTSPISM). Residues 260-499 (SIPHLILELQ…NLLIEMLHAK (240 aa)) enclose the NR LBD domain. A phospholipid derivative-binding positions include 381–384 (GATL), tyrosine 476, and lysine 480. The interval 488–499 (CNNLLIEMLHAK) is AF-2.

Belongs to the nuclear hormone receptor family. NR5 subfamily. Monomer; Binds DNA as a monomer. Detected in liver and adrenal gland.

It localises to the nucleus. It is found in the chromosome. Its function is as follows. Orphan nuclear receptor that binds DNA as a monomer to the 5'-TCAAGGCCA-3' sequence and controls expression of target genes: regulates key biological processes, such as cholesterol and bile acid synthesis pathways, as well as cartilage, liver and pancreas morphogenesis. Ligand-binding causes conformational change which causes recruitment of coactivators, promoting target gene activation. The specific ligand is unknown, but specific phospholipids, such as phosphatidylethanolamine, phosphatidylserine, dilauroyl phosphatidylcholine and diundecanoyl phosphatidylcholine can act as ligand in vitro. Acts as a pioneer transcription factor, which unwraps target DNA from histones and elicits local opening of closed chromatin. Involved in the formation of connective tissue in lower jaw. This Gallus gallus (Chicken) protein is Nuclear receptor subfamily 5 group A member 2.